A 271-amino-acid polypeptide reads, in one-letter code: Shikimate dehydrogenase (NADP(+)) (271 aa).

Residues 16–18 (SRS) and threonine 63 contribute to the shikimate site. The active-site Proton acceptor is lysine 67. Asparagine 88 and aspartate 104 together coordinate shikimate. NADP(+)-binding positions include 128-132 (GAGGA), 152-157 (NRTASK), and methionine 215. Tyrosine 217 contributes to the shikimate binding site. Glycine 238 contributes to the NADP(+) binding site.

The protein belongs to the shikimate dehydrogenase family. Homodimer.

It catalyses the reaction shikimate + NADP(+) = 3-dehydroshikimate + NADPH + H(+). It functions in the pathway metabolic intermediate biosynthesis; chorismate biosynthesis; chorismate from D-erythrose 4-phosphate and phosphoenolpyruvate: step 4/7. In terms of biological role, involved in the biosynthesis of the chorismate, which leads to the biosynthesis of aromatic amino acids. Catalyzes the reversible NADPH linked reduction of 3-dehydroshikimate (DHSA) to yield shikimate (SA). In Chromohalobacter salexigens (strain ATCC BAA-138 / DSM 3043 / CIP 106854 / NCIMB 13768 / 1H11), this protein is Shikimate dehydrogenase (NADP(+)).